We begin with the raw amino-acid sequence, 159 residues long: Alpha-lactalbumin (159 aa).

Residues 1–19 (MMRFVPLFLACISLPAFQA) form the signal peptide. The 123-residue stretch at 20-142 (TEFTKCEVSH…KLEQWRCEKP (123 aa)) folds into the C-type lysozyme domain. 4 cysteine pairs are disulfide-bonded: Cys25–Cys139, Cys47–Cys130, Cys80–Cys96, and Cys92–Cys110. Residue Asn64 is glycosylated (N-linked (GlcNAc...) asparagine). Ca(2+) is bound by residues Lys98, Asp101, Asp106, and Asp107.

It belongs to the glycosyl hydrolase 22 family. As to quaternary structure, lactose synthase (LS) is a heterodimer of a catalytic component, beta1,4-galactosyltransferase (beta4Gal-T1) and a regulatory component, alpha-lactalbumin (LA). Mammary gland specific. Secreted in milk.

It is found in the secreted. Functionally, regulatory subunit of lactose synthase, changes the substrate specificity of galactosyltransferase in the mammary gland making glucose a good acceptor substrate for this enzyme. This enables LS to synthesize lactose, the major carbohydrate component of milk. In other tissues, galactosyltransferase transfers galactose onto the N-acetylglucosamine of the oligosaccharide chains in glycoproteins. The polypeptide is Alpha-lactalbumin (Lalba) (Rattus norvegicus (Rat)).